Here is a 208-residue protein sequence, read N- to C-terminus: Large ribosomal subunit protein uL4 (208 aa).

Residues 49 to 78 are disordered; sequence KAKGISDISGTTAKPYRQKHTGRARQGSLR.

The protein belongs to the universal ribosomal protein uL4 family. As to quaternary structure, part of the 50S ribosomal subunit.

Functionally, one of the primary rRNA binding proteins, this protein initially binds near the 5'-end of the 23S rRNA. It is important during the early stages of 50S assembly. It makes multiple contacts with different domains of the 23S rRNA in the assembled 50S subunit and ribosome. In terms of biological role, forms part of the polypeptide exit tunnel. The chain is Large ribosomal subunit protein uL4 from Anaplasma phagocytophilum (strain HZ).